A 229-amino-acid polypeptide reads, in one-letter code: Demethylmenaquinone methyltransferase (229 aa).

S-adenosyl-L-methionine contacts are provided by residues T58, D78, and 100–101 (DA).

It belongs to the class I-like SAM-binding methyltransferase superfamily. MenG/UbiE family.

The catalysed reaction is a 2-demethylmenaquinol + S-adenosyl-L-methionine = a menaquinol + S-adenosyl-L-homocysteine + H(+). It participates in quinol/quinone metabolism; menaquinone biosynthesis; menaquinol from 1,4-dihydroxy-2-naphthoate: step 2/2. Its function is as follows. Methyltransferase required for the conversion of demethylmenaquinol (DMKH2) to menaquinol (MKH2). This is Demethylmenaquinone methyltransferase from Thermotoga maritima (strain ATCC 43589 / DSM 3109 / JCM 10099 / NBRC 100826 / MSB8).